Consider the following 207-residue polypeptide: Large ribosomal subunit protein uL4 (207 aa).

Over residues 45 to 57 (RQGTHSVKNRSTV) the composition is skewed to polar residues. The interval 45-77 (RQGTHSVKNRSTVSGGGRKPWRQKGTGNARQGS) is disordered.

This sequence belongs to the universal ribosomal protein uL4 family. As to quaternary structure, part of the 50S ribosomal subunit.

In terms of biological role, one of the primary rRNA binding proteins, this protein initially binds near the 5'-end of the 23S rRNA. It is important during the early stages of 50S assembly. It makes multiple contacts with different domains of the 23S rRNA in the assembled 50S subunit and ribosome. Its function is as follows. Forms part of the polypeptide exit tunnel. The protein is Large ribosomal subunit protein uL4 of Oenococcus oeni (strain ATCC BAA-331 / PSU-1).